The sequence spans 274 residues: Ribosomal RNA small subunit methyltransferase A (274 aa).

His15, Leu17, Gly42, Glu64, Asp89, and Asn108 together coordinate S-adenosyl-L-methionine.

Belongs to the class I-like SAM-binding methyltransferase superfamily. rRNA adenine N(6)-methyltransferase family. RsmA subfamily.

Its subcellular location is the cytoplasm. It catalyses the reaction adenosine(1518)/adenosine(1519) in 16S rRNA + 4 S-adenosyl-L-methionine = N(6)-dimethyladenosine(1518)/N(6)-dimethyladenosine(1519) in 16S rRNA + 4 S-adenosyl-L-homocysteine + 4 H(+). Its function is as follows. Specifically dimethylates two adjacent adenosines (A1518 and A1519) in the loop of a conserved hairpin near the 3'-end of 16S rRNA in the 30S particle. May play a critical role in biogenesis of 30S subunits. The chain is Ribosomal RNA small subunit methyltransferase A from Prochlorococcus marinus (strain MIT 9301).